The chain runs to 117 residues: Immunoglobulin lambda variable 1-44 (117 aa).

Positions 1–19 are cleaved as a signal peptide; sequence MASFPLLLTLLTHCAGSWA. Q20 bears the Pyrrolidone carboxylic acid mark. Positions 20-44 are framework-1; that stretch reads QSVLTQPPSASGTPGQRVTISCSGS. Positions 20–117 constitute an Ig-like domain; that stretch reads QSVLTQPPSA…CAAWDDSLNG (98 aa). Residues 24–35 are compositionally biased toward polar residues; that stretch reads TQPPSASGTPGQ. The tract at residues 24–45 is disordered; it reads TQPPSASGTPGQRVTISCSGSS. An intrachain disulfide couples C41 to C108. Positions 45-52 are complementarity-determining-1; the sequence is SSNIGSNT. Residues 53 to 69 form a framework-2 region; that stretch reads VNWYQQLPGTAPKLLIY. The segment at 70–72 is complementarity-determining-2; sequence SNN. Residues 73 to 108 are framework-3; that stretch reads QRPSGVPDRFSGSKSGTSASLAISGLQSEDEADYYC. The interval 109 to 117 is complementarity-determining-3; sequence AAWDDSLNG.

As to quaternary structure, immunoglobulins are composed of two identical heavy chains and two identical light chains; disulfide-linked.

The protein localises to the secreted. It is found in the cell membrane. In terms of biological role, v region of the variable domain of immunoglobulin light chains that participates in the antigen recognition. Immunoglobulins, also known as antibodies, are membrane-bound or secreted glycoproteins produced by B lymphocytes. In the recognition phase of humoral immunity, the membrane-bound immunoglobulins serve as receptors which, upon binding of a specific antigen, trigger the clonal expansion and differentiation of B lymphocytes into immunoglobulins-secreting plasma cells. Secreted immunoglobulins mediate the effector phase of humoral immunity, which results in the elimination of bound antigens. The antigen binding site is formed by the variable domain of one heavy chain, together with that of its associated light chain. Thus, each immunoglobulin has two antigen binding sites with remarkable affinity for a particular antigen. The variable domains are assembled by a process called V-(D)-J rearrangement and can then be subjected to somatic hypermutations which, after exposure to antigen and selection, allow affinity maturation for a particular antigen. The sequence is that of Immunoglobulin lambda variable 1-44 from Homo sapiens (Human).